The primary structure comprises 411 residues: Potassium channel subfamily K member 3 (411 aa).

Residues 1–8 (MKRQNVRT) lie on the Cytoplasmic side of the membrane. The helical transmembrane segment at 9–29 (LALIVCTFTYLLVGAAVFDAL) threads the bilayer. Asparagine 53 carries N-linked (GlcNAc...) asparagine glycosylation. The segment at residues 78–101 (WRFAGSFYFAITVITTIGYGHAAP) is an intramembrane region (pore-forming). A helical membrane pass occupies residues 108-128 (VFCMFYALLGIPLTLVMFQSL). Residues 129 to 158 (GERINTFVRYLLHRAKRGLGMRHAEVSMAN) lie on the Cytoplasmic side of the membrane. The chain crosses the membrane as a helical span at residues 159 to 179 (MVLIGFVSCISTLCIGAAAFS). Residues 184–207 (WTFFQAYYYCFITLTTIGFGDYVA) constitute an intramembrane region (pore-forming). A helical membrane pass occupies residues 223 to 243 (FSFVYILTGLTVIGAFLNLVV). Residues 244-411 (LRFMTMNAED…RGLMKRRSSV (168 aa)) lie on the Cytoplasmic side of the membrane.

The protein belongs to the two pore domain potassium channel (TC 1.A.1.8) family. Homodimer. Heterodimer with KCNK1. Heterodimer with KCNK9. Strongest expression in heart. Moderate expression in lung and brain. Low levels in liver, kidney and skeletal muscle. Expressed in cerebellar granule cells (at protein level).

The protein resides in the cell membrane. The enzyme catalyses K(+)(in) = K(+)(out). It catalyses the reaction Na(+)(in) = Na(+)(out). Inhibited by extracellular acidification, muscarinic signaling, divalent metal cations Zn(2+) and Ba(2+), isoflurane, bupivacaine and phenytoin. Activated by protein kinase A. Ruthenium red resistant. Its function is as follows. K(+) channel that conducts voltage-dependent outward rectifying currents upon membrane depolarization. Voltage sensing is coupled to K(+) electrochemical gradient in an 'ion flux gating' mode where outward but not inward ion flow opens the gate. Changes ion selectivity and becomes permeable to Na(+) ions in response to extracellular acidification. Protonation of the pH sensor His-98 stabilizes C-type inactivation conformation likely converting the channel from outward K(+)-conducting, to inward Na(+)-conducting to nonconductive state. Homo- and heterodimerizes to form functional channels with distinct regulatory and gating properties. Allows K(+) currents with fast-gating kinetics important for the repolarization and hyperpolarization phases of action potentials. In cerebellar granule cells, heteromeric KCNK3:KCNK9 channel may hyperpolarize the resting membrane potential to limit intrinsic neuronal excitability, but once the action potential threshold is reached, it may support high-frequency action potential firing and increased neuronal excitability. Dispensable for central chemosensory respiration i.e. breathing controlled by brainstem CO2/pH, it rather conducts pH-sensitive currents and controls the firing rate of serotonergic raphe neurons involved in potentiation of the respiratory chemoreflex. Additionally, imparts chemosensitivity to type 1 cells in carotid bodies which respond to a decrease in arterial oxygen pressure or an increase in carbon dioxide pressure or pH to initiate adaptive changes in pulmonary ventilation. In adrenal gland, contributes to the maintenance of a hyperpolarized resting membrane potential of aldosterone-producing cells at zona glomerulosa and limits aldosterone release as part of a regulatory mechanism that controls arterial blood pressure and electrolyte homeostasis. In brown adipocytes, mediates K(+) efflux that counteracts norepinephrine-induced membrane depolarization, limits Ca(2+) efflux and downstream cAMP and PKA signaling, ultimately attenuating lipid oxidation and adaptive thermogenesis. This is Potassium channel subfamily K member 3 from Rattus norvegicus (Rat).